The chain runs to 155 residues: uncharacterized protein (155 aa).

Residues 135–155 are disordered; the sequence is SQANSKNDSNSKDDLPNPFSV.

This is an uncharacterized protein from Acidianus convivator (ATV).